A 430-amino-acid chain; its full sequence is 3-phosphoshikimate 1-carboxyvinyltransferase (430 aa).

3-phosphoshikimate contacts are provided by K20, S21, and R25. Residue K20 participates in phosphoenolpyruvate binding. Residues G90 and R118 each coordinate phosphoenolpyruvate. 3-phosphoshikimate is bound by residues S163, S164, Q165, S191, D311, and K338. Residue Q165 coordinates phosphoenolpyruvate. D311 acts as the Proton acceptor in catalysis. Phosphoenolpyruvate contacts are provided by R342 and R383.

This sequence belongs to the EPSP synthase family. In terms of assembly, monomer.

It localises to the cytoplasm. It carries out the reaction 3-phosphoshikimate + phosphoenolpyruvate = 5-O-(1-carboxyvinyl)-3-phosphoshikimate + phosphate. It participates in metabolic intermediate biosynthesis; chorismate biosynthesis. In terms of biological role, catalyzes the transfer of the enolpyruvyl moiety of phosphoenolpyruvate (PEP) to the 5-hydroxyl of shikimate-3-phosphate (S3P) to produce enolpyruvyl shikimate-3-phosphate and inorganic phosphate. This chain is 3-phosphoshikimate 1-carboxyvinyltransferase, found in Methanosarcina mazei (strain ATCC BAA-159 / DSM 3647 / Goe1 / Go1 / JCM 11833 / OCM 88) (Methanosarcina frisia).